We begin with the raw amino-acid sequence, 320 residues long: Ubiquitin-like domain-containing CTD phosphatase 1 (320 aa).

The Ubiquitin-like domain occupies 6–77 (VVVIVKWSGK…LKPNFKLMMV (72 aa)). The FCP1 homology domain occupies 136–296 (PREGKKLLVL…LKLSDYLRKI (161 aa)). Mg(2+) is bound by residues D146, D148, and D255.

Mg(2+) serves as cofactor.

The protein resides in the nucleus. The catalysed reaction is O-phospho-L-seryl-[protein] + H2O = L-seryl-[protein] + phosphate. It catalyses the reaction O-phospho-L-threonyl-[protein] + H2O = L-threonyl-[protein] + phosphate. In terms of biological role, dephosphorylates 26S nuclear proteasomes, thereby decreasing their proteolytic activity. Recruited to the 19S regulatory particle of the 26S proteasome where it dephosphorylates 19S component Rpt1 which impairs Rpt1 ATPase activity and disrupts 26S proteasome assembly. The chain is Ubiquitin-like domain-containing CTD phosphatase 1 from Drosophila melanogaster (Fruit fly).